Reading from the N-terminus, the 175-residue chain is Translation initiation factor IF-3 (175 aa).

This sequence belongs to the IF-3 family. In terms of assembly, monomer.

The protein localises to the cytoplasm. IF-3 binds to the 30S ribosomal subunit and shifts the equilibrium between 70S ribosomes and their 50S and 30S subunits in favor of the free subunits, thus enhancing the availability of 30S subunits on which protein synthesis initiation begins. This Staphylococcus carnosus (strain TM300) protein is Translation initiation factor IF-3.